A 27-amino-acid polypeptide reads, in one-letter code: M-lycotoxin-Hc2a (27 aa).

Expressed by the venom gland.

Its subcellular location is the secreted. Forms pore that permeabilize the cell membrane. Promotes efflux of calcium from synaptosomes, causes hemolysis, and dissipates voltage gradients across muscle membrane. Potently inhibits the growth of bacteria, yeast and Leishmania. May function both in the prey capture strategy as well as protection from infectious organisms arising from prey ingestion. This chain is M-lycotoxin-Hc2a, found in Hogna carolinensis (Carolina wolf spider).